The sequence spans 466 residues: CCA-adding enzyme (466 aa).

Positions 55 and 58 each coordinate ATP. Residues S55 and R58 each contribute to the CTP site. Mg(2+) is bound by residues D67, D69, and D118. Positions 141, 161, and 170 each coordinate ATP. Positions 141, 161, and 170 each coordinate CTP.

This sequence belongs to the tRNA nucleotidyltransferase/poly(A) polymerase family. Archaeal CCA-adding enzyme subfamily. In terms of assembly, homodimer. The cofactor is Mg(2+).

The enzyme catalyses a tRNA precursor + 2 CTP + ATP = a tRNA with a 3' CCA end + 3 diphosphate. It carries out the reaction a tRNA with a 3' CCA end + 2 CTP + ATP = a tRNA with a 3' CCACCA end + 3 diphosphate. Catalyzes the addition and repair of the essential 3'-terminal CCA sequence in tRNAs without using a nucleic acid template. Adds these three nucleotides in the order of C, C, and A to the tRNA nucleotide-73, using CTP and ATP as substrates and producing inorganic pyrophosphate. tRNA 3'-terminal CCA addition is required both for tRNA processing and repair. Also involved in tRNA surveillance by mediating tandem CCA addition to generate a CCACCA at the 3' terminus of unstable tRNAs. While stable tRNAs receive only 3'-terminal CCA, unstable tRNAs are marked with CCACCA and rapidly degraded. The chain is CCA-adding enzyme from Haloarcula marismortui (strain ATCC 43049 / DSM 3752 / JCM 8966 / VKM B-1809) (Halobacterium marismortui).